Here is a 262-residue protein sequence, read N- to C-terminus: Hemin import ATP-binding protein HmuV (262 aa).

One can recognise an ABC transporter domain in the interval 3-244; the sequence is LQARNLTLAR…DHMRRVYGIE (242 aa). 35 to 42 serves as a coordination point for ATP; the sequence is GANGAGKS.

This sequence belongs to the ABC transporter superfamily. Heme (hemin) importer (TC 3.A.1.14.5) family. As to quaternary structure, the complex is composed of two ATP-binding proteins (HmuV), two transmembrane proteins (HmuU) and a solute-binding protein (HmuT).

The protein resides in the cell inner membrane. Part of the ABC transporter complex HmuTUV involved in hemin import. Responsible for energy coupling to the transport system. The polypeptide is Hemin import ATP-binding protein HmuV (Bordetella parapertussis (strain 12822 / ATCC BAA-587 / NCTC 13253)).